The chain runs to 390 residues: GTPase Obg (390 aa).

Residues 1–159 (MKFVDEATIK…RELRLELLLL (159 aa)) enclose the Obg domain. One can recognise an OBG-type G domain in the interval 160–333 (ADVGMLGLPN…LCDELADFMD (174 aa)). Residues 166 to 173 (GLPNAGKS), 191 to 195 (FTTLI), 213 to 216 (DIPG), 283 to 286 (NKTD), and 314 to 316 (AAV) each bind GTP. Positions 173 and 193 each coordinate Mg(2+).

This sequence belongs to the TRAFAC class OBG-HflX-like GTPase superfamily. OBG GTPase family. In terms of assembly, monomer. It depends on Mg(2+) as a cofactor.

The protein resides in the cytoplasm. Functionally, an essential GTPase which binds GTP, GDP and possibly (p)ppGpp with moderate affinity, with high nucleotide exchange rates and a fairly low GTP hydrolysis rate. Plays a role in control of the cell cycle, stress response, ribosome biogenesis and in those bacteria that undergo differentiation, in morphogenesis control. This Aliivibrio fischeri (strain ATCC 700601 / ES114) (Vibrio fischeri) protein is GTPase Obg.